We begin with the raw amino-acid sequence, 89 residues long: Small ribosomal subunit protein uS17 (89 aa).

It belongs to the universal ribosomal protein uS17 family. In terms of assembly, part of the 30S ribosomal subunit.

In terms of biological role, one of the primary rRNA binding proteins, it binds specifically to the 5'-end of 16S ribosomal RNA. The chain is Small ribosomal subunit protein uS17 from Chlorobium chlorochromatii (strain CaD3).